Reading from the N-terminus, the 144-residue chain is Protein NrdI (144 aa).

Belongs to the NrdI family.

Its function is as follows. Probably involved in ribonucleotide reductase function. The polypeptide is Protein NrdI (Streptococcus pyogenes serotype M4 (strain MGAS10750)).